Here is a 496-residue protein sequence, read N- to C-terminus: MTTEHFEELNDQQIIRREKMAALAEQGIDPFGKRFERTANSGQLKEKYADKSKEELHDLADTATIAGRLMTKRGKGKVGFAHIQDREGQIQIYVRKDEVGEENYEIFKKADLGDFLGVEGEVMRTDMGELSIKATHITHLSKALRPLPEKFHGLTDVETIYRKRYLDLISNRESFNRFVTRSKIISEIRRYLDGQGFLEVETPVLHNEAGGAAARPFITHHNAQNIDMVLRIATELHLKRLIVGGMERVYEIGRIFRNEGMDATHNPEFTSIEVYQAYADFQDIMDLTEGIIQHAAISVCGDGPINYQGTEIKINEPFKRVHMVDAIKEITGVDFWQDMSFEEATALAKEKNVPLEKHFTEVGHVINAFFEEFVEETLTQPTFIYGHPVAVSPLAKKNPEDPRFTDRFELFIMTKEYANAFTELNDPIDQLSRFEAQAKAKELGDDEATGIDYDYVEALEYGMPPTGGLGIGIDRLVMLLTDVTTIRDVLLFPTMK.

Positions 409 and 416 each coordinate Mg(2+).

The protein belongs to the class-II aminoacyl-tRNA synthetase family. As to quaternary structure, homodimer. It depends on Mg(2+) as a cofactor.

The protein resides in the cytoplasm. It catalyses the reaction tRNA(Lys) + L-lysine + ATP = L-lysyl-tRNA(Lys) + AMP + diphosphate. This is Lysine--tRNA ligase from Streptococcus gordonii (strain Challis / ATCC 35105 / BCRC 15272 / CH1 / DL1 / V288).